The chain runs to 566 residues: KsdD-like steroid dehydrogenase MT0809 (566 aa).

Residue Asp-23–Asn-54 participates in FAD binding.

This sequence belongs to the FAD-dependent oxidoreductase 2 family. It depends on FAD as a cofactor.

It functions in the pathway lipid metabolism; steroid biosynthesis. Able to catalyze the elimination of the C-1 and C-2 hydrogen atoms of the A-ring from the polycyclic ring structure of 3-ketosteroids. The chain is KsdD-like steroid dehydrogenase MT0809 from Mycobacterium tuberculosis (strain CDC 1551 / Oshkosh).